The chain runs to 472 residues: Trigger factor (472 aa).

Positions Gly174 to Pro261 constitute a PPIase FKBP-type domain. The disordered stretch occupies residues Asn433–Ser472. The span at Lys439 to Lys451 shows a compositional bias: basic and acidic residues.

The protein belongs to the FKBP-type PPIase family. Tig subfamily.

It localises to the cytoplasm. It carries out the reaction [protein]-peptidylproline (omega=180) = [protein]-peptidylproline (omega=0). Functionally, involved in protein export. Acts as a chaperone by maintaining the newly synthesized protein in an open conformation. Functions as a peptidyl-prolyl cis-trans isomerase. The protein is Trigger factor of Prochlorococcus marinus (strain NATL1A).